A 95-amino-acid chain; its full sequence is Putative septation protein SpoVG (95 aa).

It belongs to the SpoVG family.

Its function is as follows. Could be involved in septation. The sequence is that of Putative septation protein SpoVG from Clostridium acetobutylicum (strain ATCC 824 / DSM 792 / JCM 1419 / IAM 19013 / LMG 5710 / NBRC 13948 / NRRL B-527 / VKM B-1787 / 2291 / W).